The following is a 320-amino-acid chain: HPr kinase/phosphorylase (320 aa).

Catalysis depends on residues His139 and Lys160. Residue 154–161 (GDSGVGKS) participates in ATP binding. Residue Ser161 participates in Mg(2+) binding. Asp178 serves as the catalytic Proton acceptor; for phosphorylation activity. Proton donor; for dephosphorylation activity. The important for the catalytic mechanism of both phosphorylation and dephosphorylation stretch occupies residues 202–211 (MEIRGIGIID). Glu203 is a Mg(2+) binding site. The active site involves Arg244. An important for the catalytic mechanism of dephosphorylation region spans residues 265 to 270 (PVKTGR).

This sequence belongs to the HPrK/P family. In terms of assembly, homohexamer. Mg(2+) is required as a cofactor.

It carries out the reaction [HPr protein]-L-serine + ATP = [HPr protein]-O-phospho-L-serine + ADP + H(+). The catalysed reaction is [HPr protein]-O-phospho-L-serine + phosphate + H(+) = [HPr protein]-L-serine + diphosphate. Its function is as follows. Catalyzes the ATP- as well as the pyrophosphate-dependent phosphorylation of a specific serine residue in HPr, a phosphocarrier protein of the phosphoenolpyruvate-dependent sugar phosphotransferase system (PTS). HprK/P also catalyzes the pyrophosphate-producing, inorganic phosphate-dependent dephosphorylation (phosphorolysis) of seryl-phosphorylated HPr (P-Ser-HPr). The two antagonistic activities of HprK/P are regulated by several intracellular metabolites, which change their concentration in response to the absence or presence of rapidly metabolisable carbon sources (glucose, fructose, etc.) in the growth medium. Therefore, by controlling the phosphorylation state of HPr, HPrK/P is a sensor enzyme that plays a major role in the regulation of carbon metabolism and sugar transport: it mediates carbon catabolite repression (CCR), and regulates PTS-catalyzed carbohydrate uptake and inducer exclusion. In Limosilactobacillus reuteri (strain DSM 20016) (Lactobacillus reuteri), this protein is HPr kinase/phosphorylase.